The following is a 620-amino-acid chain: Chaperone protein HtpG (620 aa).

Residues 1–334 form an a; substrate-binding region; the sequence is MTTTDTAPQT…SEDLPLNLSR (334 aa). The segment at 335–548 is b; the sequence is EMLQNNPQLV…GQGPDRALER (214 aa). A c region spans residues 549 to 620; it reads MLAQQNRGGA…RINRLVLRAL (72 aa).

Belongs to the heat shock protein 90 family. As to quaternary structure, homodimer.

It is found in the cytoplasm. In terms of biological role, molecular chaperone. Has ATPase activity. The protein is Chaperone protein HtpG of Rhodopseudomonas palustris (strain BisA53).